Consider the following 626-residue polypeptide: Chaperone protein HtpG (626 aa).

Positions 1–338 are a; substrate-binding; it reads MTANKNQKKT…SNDLPLNVSR (338 aa). Positions 339–553 are b; the sequence is EILQDHKLVY…SNEMSTQMAK (215 aa). Residues 554–626 form a c region; that stretch reads LFSAAGQTVP…ARINDLLINN (73 aa).

Belongs to the heat shock protein 90 family. Homodimer.

It localises to the cytoplasm. Functionally, molecular chaperone. Has ATPase activity. This is Chaperone protein HtpG from Buchnera aphidicola subsp. Baizongia pistaciae (strain Bp).